We begin with the raw amino-acid sequence, 666 residues long: Calpain-10 (666 aa).

Positions 13–321 (LFRDAAFPAS…FDEVTIGYPV (309 aa)) constitute a Calpain catalytic domain. Catalysis depends on residues Cys-73, His-238, and Asn-263. Domain III regions lie at residues 322–488 (TEAG…ISLS) and 507–648 (EWET…IHSQ).

It belongs to the peptidase C2 family.

Calcium-regulated non-lysosomal thiol-protease which catalyzes limited proteolysis of substrates involved in cytoskeletal remodeling and signal transduction. May play a role in insulin-stimulated glucose uptake. The polypeptide is Calpain-10 (Capn10) (Mus musculus (Mouse)).